The primary structure comprises 286 residues: Aminoglycoside N(3)-acetyltransferase VIII (286 aa).

This sequence belongs to the antibiotic N-acetyltransferase family.

It catalyses the reaction a 2-deoxystreptamine antibiotic + acetyl-CoA = an N(3)-acetyl-2-deoxystreptamine antibiotic + CoA + H(+). Resistance to neomycin. This Streptomyces fradiae (Streptomyces roseoflavus) protein is Aminoglycoside N(3)-acetyltransferase VIII (aacC8).